Consider the following 1588-residue polypeptide: Ubiquitin carboxyl-terminal hydrolase 54 (1588 aa).

Arg-12 carries the omega-N-methylarginine modification. The USP domain maps to Lys-31–Pro-352. The active-site Nucleophile is the Cys-42. Zn(2+) is bound by residues His-67, Cys-69, Cys-74, Cys-77, His-133, Cys-145, Cys-150, His-153, Cys-166, Cys-169, Cys-225, and Cys-229. The active-site Proton acceptor is His-302. 2 stretches are compositionally biased toward basic and acidic residues: residues Asp-380 to Gln-391 and Ser-424 to Ala-434. Disordered stretches follow at residues Asp-380–Leu-447 and His-459–Arg-519. Ser-424 is subject to Phosphoserine. 2 stretches are compositionally biased toward polar residues: residues Arg-436–Ser-445 and His-459–Ala-471. A compositionally biased stretch (low complexity) spans Thr-499 to Ser-512. Residues Ser-574, Ser-613, and Ser-616 each carry the phosphoserine modification. Residues Glu-601–Ser-616 are compositionally biased toward low complexity. Residues Glu-601 to Ala-620 form a disordered region. The stretch at Thr-678–Gly-712 forms a coiled coil. Disordered regions lie at residues Arg-801–Val-839, Asp-856–Gly-895, Glu-950–Asp-969, Thr-1093–Arg-1172, and Gly-1525–Glu-1562. A compositionally biased stretch (low complexity) spans Gln-808–Ser-825. Positions Ser-878–Gly-895 are enriched in polar residues. Ser-1138 bears the Phosphoserine mark. Residues Arg-1536–Arg-1547 show a composition bias toward basic and acidic residues.

The protein belongs to the peptidase C19 family.

The catalysed reaction is Thiol-dependent hydrolysis of ester, thioester, amide, peptide and isopeptide bonds formed by the C-terminal Gly of ubiquitin (a 76-residue protein attached to proteins as an intracellular targeting signal).. Its function is as follows. Deubiquitinase that specifically mediates 'Lys-63'-linked deubiquitination of substrates with a polyubiquitin chain composed of at least 3 ubiquitins. Specifically recognizes ubiquitin chain in position S2 and catalyzes cleavage of polyubiquitin within 'Lys-63'-linked chains. Not able to deubiquitinate substrates with shorter ubiquitin chains. Mediates deubiquitination of PLK4, maintaining PLK4 stability by reducing its ubiquitination-mediated degradation. The sequence is that of Ubiquitin carboxyl-terminal hydrolase 54 (Usp54) from Rattus norvegicus (Rat).